The sequence spans 300 residues: FeMo cofactor biosynthesis protein NifB (300 aa).

One can recognise a Radical SAM core domain in the interval 24–266 (HDKVGRVHLP…PQFRACGQCR (243 aa)). [4Fe-4S] cluster-binding residues include C38, C42, and C45. S-adenosyl-L-methionine contacts are provided by G93, T144, and I196. C262 and C265 together coordinate [4Fe-4S] cluster.

The protein belongs to the radical SAM superfamily. NifB family. Monomer. Requires [4Fe-4S] cluster as cofactor.

The protein operates within cofactor biosynthesis; Fe-Mo cofactor biosynthesis. Its function is as follows. Involved in the biosynthesis of the iron-molybdenum cofactor (FeMo-co or M-cluster) found in the dinitrogenase enzyme of the nitrogenase complex in nitrogen-fixing microorganisms. NifB catalyzes the crucial step of radical SAM-dependent carbide insertion that occurs concomitant with the insertion of a 9th sulfur and the rearrangement/coupling of two [4Fe-4S] clusters into a [8Fe-9S-C] cluster, the precursor to the M-cluster. This is FeMo cofactor biosynthesis protein NifB from Methanocaldococcus jannaschii (strain ATCC 43067 / DSM 2661 / JAL-1 / JCM 10045 / NBRC 100440) (Methanococcus jannaschii).